We begin with the raw amino-acid sequence, 180 residues long: Large ribosomal subunit protein uL6c (180 aa).

The protein belongs to the universal ribosomal protein uL6 family. As to quaternary structure, part of the 50S ribosomal subunit.

The protein resides in the plastid. It is found in the chloroplast. Functionally, binds 23S rRNA. The protein is Large ribosomal subunit protein uL6c (rpl6) of Porphyra purpurea (Red seaweed).